Consider the following 206-residue polypeptide: Pyridoxine/pyridoxamine 5'-phosphate oxidase (206 aa).

FMN-binding positions include 53–58 (RMVLLK), 68–69 (YT), Lys-75, and Gln-97. Lys-58 provides a ligand contact to substrate. 3 residues coordinate substrate: Tyr-115, Arg-119, and Ser-123. Residues 132–133 (QS) and Trp-177 each bind FMN. A substrate-binding site is contributed by 183–185 (RLH). FMN is bound at residue Arg-187.

The protein belongs to the pyridoxamine 5'-phosphate oxidase family. Homodimer. Requires FMN as cofactor.

It catalyses the reaction pyridoxamine 5'-phosphate + O2 + H2O = pyridoxal 5'-phosphate + H2O2 + NH4(+). It carries out the reaction pyridoxine 5'-phosphate + O2 = pyridoxal 5'-phosphate + H2O2. The protein operates within cofactor metabolism; pyridoxal 5'-phosphate salvage; pyridoxal 5'-phosphate from pyridoxamine 5'-phosphate: step 1/1. Its pathway is cofactor metabolism; pyridoxal 5'-phosphate salvage; pyridoxal 5'-phosphate from pyridoxine 5'-phosphate: step 1/1. Functionally, catalyzes the oxidation of either pyridoxine 5'-phosphate (PNP) or pyridoxamine 5'-phosphate (PMP) into pyridoxal 5'-phosphate (PLP). The protein is Pyridoxine/pyridoxamine 5'-phosphate oxidase of Allorhizobium ampelinum (strain ATCC BAA-846 / DSM 112012 / S4) (Agrobacterium vitis (strain S4)).